Reading from the N-terminus, the 222-residue chain is N-(5'-phosphoribosyl)anthranilate isomerase (222 aa).

This sequence belongs to the TrpF family.

The catalysed reaction is N-(5-phospho-beta-D-ribosyl)anthranilate = 1-(2-carboxyphenylamino)-1-deoxy-D-ribulose 5-phosphate. Its pathway is amino-acid biosynthesis; L-tryptophan biosynthesis; L-tryptophan from chorismate: step 3/5. The polypeptide is N-(5'-phosphoribosyl)anthranilate isomerase (Xanthomonas oryzae pv. oryzae (strain PXO99A)).